We begin with the raw amino-acid sequence, 253 residues long: Methionine aminopeptidase (253 aa).

Residue His78 participates in substrate binding. Asp95, Asp106, and His169 together coordinate a divalent metal cation. Residue His176 coordinates substrate. Glu206 and Glu237 together coordinate a divalent metal cation.

It belongs to the peptidase M24A family. Methionine aminopeptidase type 1 subfamily. As to quaternary structure, monomer. The cofactor is Co(2+). It depends on Zn(2+) as a cofactor. Mn(2+) serves as cofactor. Requires Fe(2+) as cofactor.

The enzyme catalyses Release of N-terminal amino acids, preferentially methionine, from peptides and arylamides.. Removes the N-terminal methionine from nascent proteins. The N-terminal methionine is often cleaved when the second residue in the primary sequence is small and uncharged (Met-Ala-, Cys, Gly, Pro, Ser, Thr, or Val). Requires deformylation of the N(alpha)-formylated initiator methionine before it can be hydrolyzed. The sequence is that of Methionine aminopeptidase from Helicobacter pylori (strain ATCC 700392 / 26695) (Campylobacter pylori).